The sequence spans 320 residues: o-succinylbenzoate synthase (320 aa).

K133 serves as the catalytic Proton donor. Mg(2+) is bound by residues D161, E190, and D213. Residue K235 is the Proton acceptor of the active site.

Belongs to the mandelate racemase/muconate lactonizing enzyme family. MenC type 1 subfamily. A divalent metal cation serves as cofactor.

It catalyses the reaction (1R,6R)-6-hydroxy-2-succinyl-cyclohexa-2,4-diene-1-carboxylate = 2-succinylbenzoate + H2O. The protein operates within quinol/quinone metabolism; 1,4-dihydroxy-2-naphthoate biosynthesis; 1,4-dihydroxy-2-naphthoate from chorismate: step 4/7. It functions in the pathway quinol/quinone metabolism; menaquinone biosynthesis. Its function is as follows. Converts 2-succinyl-6-hydroxy-2,4-cyclohexadiene-1-carboxylate (SHCHC) to 2-succinylbenzoate (OSB). The protein is o-succinylbenzoate synthase of Salmonella agona (strain SL483).